Reading from the N-terminus, the 348-residue chain is Uroporphyrinogen decarboxylase (348 aa).

Residues 23-27 (RQAGR), aspartate 72, tyrosine 148, serine 203, and histidine 316 each bind substrate.

The protein belongs to the uroporphyrinogen decarboxylase family. In terms of assembly, homodimer.

It localises to the cytoplasm. It carries out the reaction uroporphyrinogen III + 4 H(+) = coproporphyrinogen III + 4 CO2. Its pathway is porphyrin-containing compound metabolism; protoporphyrin-IX biosynthesis; coproporphyrinogen-III from 5-aminolevulinate: step 4/4. In terms of biological role, catalyzes the decarboxylation of four acetate groups of uroporphyrinogen-III to yield coproporphyrinogen-III. The chain is Uroporphyrinogen decarboxylase from Myxococcus xanthus (strain DK1622).